We begin with the raw amino-acid sequence, 367 residues long: Carbohydrate sulfotransferase 14 (367 aa).

Topologically, residues 1–34 are cytoplasmic; sequence MPPRKKEYGIKRASGSLVHFRAPVSATTIRRHSA. Residues 35–55 form a helical; Signal-anchor for type II membrane protein membrane-spanning segment; the sequence is VVPSVLTFAVIVASGGLLLMI. The Lumenal portion of the chain corresponds to 56 to 367; the sequence is EKGMLNSVQT…PNTTTEYCRH (312 aa). The N-linked (GlcNAc...) asparagine glycan is linked to Asn99. 3'-phosphoadenylyl sulfate is bound by residues 144–150 and 202–210; these read PKVACSN and REPMARLLS. An N-linked (GlcNAc...) asparagine glycan is attached at Asn359.

The protein belongs to the sulfotransferase 2 family.

Its subcellular location is the golgi apparatus membrane. Functionally, catalyzes the transfer of sulfate to position 4 of the N-acetylgalactosamine (GalNAc) residue of dermatan sulfate. The protein is Carbohydrate sulfotransferase 14 (chst14) of Danio rerio (Zebrafish).